Reading from the N-terminus, the 156-residue chain is SsrA-binding protein (156 aa).

It belongs to the SmpB family.

Its subcellular location is the cytoplasm. Functionally, required for rescue of stalled ribosomes mediated by trans-translation. Binds to transfer-messenger RNA (tmRNA), required for stable association of tmRNA with ribosomes. tmRNA and SmpB together mimic tRNA shape, replacing the anticodon stem-loop with SmpB. tmRNA is encoded by the ssrA gene; the 2 termini fold to resemble tRNA(Ala) and it encodes a 'tag peptide', a short internal open reading frame. During trans-translation Ala-aminoacylated tmRNA acts like a tRNA, entering the A-site of stalled ribosomes, displacing the stalled mRNA. The ribosome then switches to translate the ORF on the tmRNA; the nascent peptide is terminated with the 'tag peptide' encoded by the tmRNA and targeted for degradation. The ribosome is freed to recommence translation, which seems to be the essential function of trans-translation. In Lactiplantibacillus plantarum (strain ATCC BAA-793 / NCIMB 8826 / WCFS1) (Lactobacillus plantarum), this protein is SsrA-binding protein.